A 271-amino-acid polypeptide reads, in one-letter code: Tryptophan synthase alpha chain (271 aa).

Active-site proton acceptor residues include glutamate 49 and aspartate 60.

The protein belongs to the TrpA family. As to quaternary structure, tetramer of two alpha and two beta chains.

The catalysed reaction is (1S,2R)-1-C-(indol-3-yl)glycerol 3-phosphate + L-serine = D-glyceraldehyde 3-phosphate + L-tryptophan + H2O. The protein operates within amino-acid biosynthesis; L-tryptophan biosynthesis; L-tryptophan from chorismate: step 5/5. The alpha subunit is responsible for the aldol cleavage of indoleglycerol phosphate to indole and glyceraldehyde 3-phosphate. In Burkholderia multivorans (strain ATCC 17616 / 249), this protein is Tryptophan synthase alpha chain.